We begin with the raw amino-acid sequence, 303 residues long: L(+)-tartrate dehydratase subunit alpha (303 aa).

Cysteine 71, cysteine 190, and cysteine 277 together coordinate iron-sulfur cluster.

This sequence belongs to the class-I fumarase family. Tetramer of two alpha and two beta subunits. The cofactor is iron-sulfur cluster.

The enzyme catalyses (2R,3R)-tartrate = oxaloacetate + H2O. This chain is L(+)-tartrate dehydratase subunit alpha (ttdA), found in Escherichia coli O6:K15:H31 (strain 536 / UPEC).